The sequence spans 67 residues: Conotoxin TsMMSK-011 (67 aa).

The first 20 residues, 1–20 (MMSKLGVLLTICLLLFPLTA), serve as a signal peptide directing secretion. Positions 21–50 (VQLDGDQPADLPALRTQDISTDHSPWFDPV) are excised as a propeptide. Cystine bridges form between Cys53–Cys65, Cys54–Cys61, and Cys58–Cys64. Position 63 is a 4-hydroxyproline (Pro63).

The protein belongs to the conotoxin M superfamily. Expressed by the venom duct.

Its subcellular location is the secreted. The protein is Conotoxin TsMMSK-011 of Conus tessulatus (Tessellate cone).